The chain runs to 659 residues: Cytochrome bo(3) ubiquinol oxidase subunit 1 (659 aa).

The Extracellular segment spans residues 1–14; sequence MFGKLTLKAIPVDE. The chain crosses the membrane as a helical span at residues 15–35; that stretch reads PIIMVTYISIILIALFISFSI. Topologically, residues 36–58 are cytoplasmic; sequence TYFKKWKYLWYEWFTTVDHKKIS. Residues 59-79 form a helical membrane-spanning segment; the sequence is IMYGILAFIMLFRGFVDAILM. Residues Arg71, Asp75, and His98 each coordinate a ubiquinone. The Extracellular segment spans residues 80–106; the sequence is RTQQVIASSGNTGFLPPHHYDQIFTAH. Residue His106 coordinates heme b. The helical transmembrane segment at 107 to 127 threads the bilayer; it reads GVIMIFFVAMPLVIGLMNLVV. At 128–145 the chain is on the cytoplasmic side; the sequence is PLQIGARDVAFPFLNNLS. A helical membrane pass occupies residues 146–166; it reads FWLNVSGAILLTLSLGIGEFA. Topologically, residues 167-189 are extracellular; that stretch reads QTGWLAYPPLSEVKYSPGVGVDY. Trp170 lines the heme b pocket. The helical transmembrane segment at 190 to 210 threads the bilayer; the sequence is WIWSLQISGVGTTLTGINFLI. At 211-225 the chain is on the cytoplasmic side; that stretch reads TILKMRAPGMCFFKM. Residues 226–246 traverse the membrane as a helical segment; the sequence is PVFTWAALCTNILIVISFPVL. The Extracellular segment spans residues 247 to 277; sequence TTTLLLLTLDRCFDFHFFTNNFGGNPMMYVN. Residues 278–298 form a helical membrane-spanning segment; sequence LIWIWGHPEVYILVLPVFGVF. His284 is a binding site for Cu(2+). A cross-link (1'-histidyl-3'-tyrosine (His-Tyr)) is located at residues 284–288; it reads HPEVY. Tyr288 contacts Fe(II)-heme o. The Cytoplasmic segment spans residues 299 to 309; the sequence is SEVVATFSKKR. Residues 310–330 form a helical membrane-spanning segment; that stretch reads LFGYVSLVWATLAITILSFIV. At 331-347 the chain is on the extracellular side; sequence WLHHFFTMGAGSNVNAF. Positions 333 and 334 each coordinate Cu(2+). A helical transmembrane segment spans residues 348-368; sequence FGITTMIIAIPTGVKIFNWLF. Residues 369-380 are Cytoplasmic-facing; sequence TMYQGRVHMHSS. The chain crosses the membrane as a helical span at residues 381 to 401; sequence MLWTIGFLITFSIGGMTGVLL. The Extracellular segment spans residues 402–413; sequence SIPPADFILHNS. Fe(II)-heme o is bound by residues His411 and His419. A helical membrane pass occupies residues 414 to 434; the sequence is LFLVAHFHNVIIGGVVFGCFA. His421 is a heme b binding site. Over 435-456 the chain is Cytoplasmic; sequence GINYWFPKLFGFILNELWGKRA. The helical transmembrane segment at 457-477 threads the bilayer; the sequence is FWFWIIGFFTAFMPLYFLGFM. At 478–490 the chain is on the extracellular side; the sequence is GMTRRLSQNIDIE. Arg481 and Arg482 together coordinate heme b. A helical transmembrane segment spans residues 491 to 511; that stretch reads FHFLLSIAAIGAILIGIGILC. At 512–580 the chain is on the cytoplasmic side; that stretch reads QIIQFWVSVR…KNQVQKKQYS (69 aa). A helical membrane pass occupies residues 581 to 601; the sequence is AIHMPKNTGLGIFISFFSLLF. Residues 602–605 lie on the Extracellular side of the membrane; that stretch reads GFSA. Residues 606 to 626 traverse the membrane as a helical segment; that stretch reads VWNIIWLSFLSFLVVIISLIF. At 627-659 the chain is on the cytoplasmic side; the sequence is KSIDENTEYTVSVKEIESIENRHLENVQKAGLK.

It belongs to the heme-copper respiratory oxidase family. The cytochrome bo(3) ubiquinol oxidase complex is a heterooctamer of two A chains, two B chains, two C chains and two D chains. Requires Cu(2+) as cofactor. It depends on heme b as a cofactor. Fe(II)-heme o serves as cofactor.

Its subcellular location is the cell membrane. It carries out the reaction 2 a ubiquinol + O2 + n H(+)(in) = 2 a ubiquinone + 2 H2O + n H(+)(out). Cytochrome bo(3) ubiquinol oxidase is the terminal enzyme in the aerobic respiratory chain. Catalyzes the four-electron reduction of O2 to water, using a ubiquinol as a membrane soluble electron donor for molecular oxygen reduction. Has proton pump activity across the membrane in addition to electron transfer, pumping 2 protons/electron and generating a proton motive force. All the redox centers of this enzyme complex are located within the largest subunit, subunit I. Protons are probably pumped via D- and K- channels found in this subunit. The sequence is that of Cytochrome bo(3) ubiquinol oxidase subunit 1 (cyoB) from Buchnera aphidicola subsp. Schizaphis graminum (strain Sg).